The primary structure comprises 383 residues: Protein delta homolog 2 (383 aa).

The N-terminal stretch at 1-26 (MPSGCRCLHLVCLLCILGAPGQPVRA) is a signal peptide. EGF-like domains follow at residues 27–58 (DDCS…LHCE), 62–89 (RMPG…KFCD), 91–129 (DEHI…RDCE), and 131–172 (KAGP…ARCE). Over 27–306 (DDCSSHCDLA…RQEAGLGEPS (280 aa)) the chain is Extracellular. 17 disulfide bridges follow: cysteine 29–cysteine 40, cysteine 33–cysteine 46, cysteine 48–cysteine 57, cysteine 66–cysteine 71, cysteine 79–cysteine 88, cysteine 95–cysteine 107, cysteine 101–cysteine 117, cysteine 119–cysteine 128, cysteine 135–cysteine 148, cysteine 142–cysteine 160, cysteine 162–cysteine 171, cysteine 178–cysteine 189, cysteine 183–cysteine 198, cysteine 200–cysteine 209, cysteine 216–cysteine 227, cysteine 221–cysteine 236, and cysteine 238–cysteine 247. Asparagine 157 carries N-linked (GlcNAc...) asparagine glycosylation. The 37-residue stretch at 174–210 (NVDDCLMRPCANGATCLDGINRFSCLCPEGFAGRFCT) folds into the EGF-like 5; calcium-binding domain. Residues 212–248 (NLDDCASRPCQRGARCRDRVHDFDCLCPSGYGGKTCE) form the EGF-like 6; calcium-binding domain. The helical transmembrane segment at 307–327 (LVALVVFGALTAALVLATVLL) threads the bilayer. Residues 328–383 (TLRAWRRGVCPPGPCCYPAPHYAPACQDQECQVSMLPAGLPLPRDLPPEPGKTTAL) are Cytoplasmic-facing.

Its subcellular location is the membrane. Regulates adipogenesis. In Homo sapiens (Human), this protein is Protein delta homolog 2 (DLK2).